The following is a 72-amino-acid chain: Protein SlyX homolog (72 aa).

Residues 53-72 (KDISPSNIRREEEETPPPHY) form a disordered region.

This sequence belongs to the SlyX family.

The protein is Protein SlyX homolog of Marinobacter nauticus (strain ATCC 700491 / DSM 11845 / VT8) (Marinobacter aquaeolei).